The following is a 176-amino-acid chain: Small ribosomal subunit protein uS5 (176 aa).

The S5 DRBM domain occupies 11–74 (LSEVLVDVNR…QAAKKKMMKV (64 aa)).

This sequence belongs to the universal ribosomal protein uS5 family. In terms of assembly, part of the 30S ribosomal subunit. Contacts proteins S4 and S8.

Functionally, with S4 and S12 plays an important role in translational accuracy. Located at the back of the 30S subunit body where it stabilizes the conformation of the head with respect to the body. The sequence is that of Small ribosomal subunit protein uS5 from Rickettsia bellii (strain RML369-C).